Reading from the N-terminus, the 497-residue chain is Inactive metallocarboxypeptidase ecm14 (497 aa).

A signal peptide spans 1–28; it reads MAYNKSLKSLVFILLASQIVFVLFLCYG. Positions 29-148 are excised as a propeptide; it reads KSSRELGVKW…TLFESIVPDT (120 aa). The region spanning 182–492 is the Peptidase M14 domain; the sequence is SYQNLESINS…AMILYYGEFI (311 aa). Residues His-248 and Glu-251 each coordinate Zn(2+). Substrate contacts are provided by residues 248–251 and 323–324; these read HARE and DA. The cysteines at positions 317 and 337 are disulfide-linked. His-377 contacts Zn(2+). Residue 378-379 participates in substrate binding; it reads SY.

The protein belongs to the peptidase M14 family. Zn(2+) is required as a cofactor.

It is found in the endoplasmic reticulum. The protein localises to the secreted. In terms of biological role, inactive carboxypeptidase that may play a role in cell wall organization and biogenesis. The sequence is that of Inactive metallocarboxypeptidase ecm14 from Schizosaccharomyces pombe (strain 972 / ATCC 24843) (Fission yeast).